Here is a 119-residue protein sequence, read N- to C-terminus: Circadian clock oscillator protein KaiB (119 aa).

This sequence belongs to the KaiB family. May undergo a major conformational rearrangment; in the free state forms homooligomers. When bound to KaiC switches to a monomeric thioredoxin-fold (KaiB(fs)). The active oscillator complex is probably KaiC(6):KaiB(6).

Component of the KaiBC clock protein complex, which constitutes the main circadian regulator in cyanobacteria; it may modify the ATPase activity of KaiC. In terms of biological role, may be a metamorphic protein which reversibly switches between an inactive tetrameric fold and a rare, thioredoxin-like monomeric fold (KaiB(fs)). KaiB(fs) binds phospho-KaiC, and perhaps clock output effectors. This Prochlorococcus marinus (strain MIT 9313) protein is Circadian clock oscillator protein KaiB.